We begin with the raw amino-acid sequence, 256 residues long: MQRTKEAVKASDGNLLGDPGRIPLSKRESIKWQRPRFTRQALMRCCLIKWILSSAAPQGSDSSDSELELSTVRHQPEGLDQLQAQTKFTKKELQSLYRGFKNECPTGLVDEDTFKLIYSQFFPQGDATTYAHFLFNAFDADGNGAIHFEDFVVGLSILLRGTVHEKLKWAFNLYDINKDGCITKEEMLAIMKSIYDMMGRHTYPILREDAPLEHVERFFQKMDRNQDGVVTIDEFLETCQKDENIMNSMQLFENVI.

A disordered region spans residues 1–22 (MQRTKEAVKASDGNLLGDPGRI). K26 is covalently cross-linked (Glycyl lysine isopeptide (Lys-Gly) (interchain with G-Cter in SUMO1)). S-palmitoyl cysteine attachment occurs at residues C45 and C46. 2 positions are modified to phosphoserine: S60 and S63. An EF-hand 1; degenerate domain is found at 67–123 (LELSTVRHQPEGLDQLQAQTKFTKKELQSLYRGFKNECPTGLVDEDTFKLIYSQFFP). K90 is covalently cross-linked (Glycyl lysine isopeptide (Lys-Gly) (interchain with G-Cter in SUMO1)). 3 consecutive EF-hand domains span residues 126-161 (DATT…LLRG), 162-197 (TVHE…IYDM), and 210-245 (APLE…DENI). D175, N177, D179, C181, E186, D223, N225, D227, and E234 together coordinate Ca(2+). An interaction with KCND2 region spans residues 243 to 256 (ENIMNSMQLFENVI).

The protein belongs to the recoverin family. As to quaternary structure, binds to DNA as a homomultimer. Dimerization is induced by binding to calcium. Interacts with the C-terminus of PSEN1 and PSEN2 and with PSEN2 CTF subunit. Associates with KCN1. Component of heteromultimeric potassium channels. Identified in potassium channel complexes containing KCND1, KCND2, KCND3, KCNIP1, KCNIP2, KCNIP3, KCNIP4, DPP6 and DPP10. Interacts with KCND2 and KCND3. Palmitoylated. Palmitoylation enhances association with the plasma membrane. Post-translationally, proteolytically cleaved by caspase-3. In terms of tissue distribution, highly expressed in brain. Isoform 1 or isoform 4 (T+ forms) are expressed at equal levels with isoform 2 or isoform 3 (T- forms). Primarily detected in the layer V and deep layer VI of the cerebral cortex, the hippocampus, and the entire cerebellum. Expressed at low levels in testis. Also expressed in heart.

It is found in the cytoplasm. It localises to the cell membrane. The protein resides in the endoplasmic reticulum. Its subcellular location is the golgi apparatus. The protein localises to the nucleus. Its function is as follows. Calcium-dependent transcriptional repressor that binds to the DRE element of genes including PDYN and FOS. Affinity for DNA is reduced upon binding to calcium and enhanced by binding to magnesium. Seems to be involved in nociception. Functionally, regulatory subunit of Kv4/D (Shal)-type voltage-gated rapidly inactivating A-type potassium channels, such as KCND2/Kv4.2 and KCND3/Kv4.3. Modulates channel expression at the cell membrane, gating characteristics, inactivation kinetics and rate of recovery from inactivation in a calcium-dependent and isoform-specific manner. In terms of biological role, may play a role in the regulation of PSEN2 proteolytic processing and apoptosis. Together with PSEN2 involved in modulation of amyloid-beta formation. The sequence is that of Calsenilin (Kcnip3) from Mus musculus (Mouse).